A 116-amino-acid polypeptide reads, in one-letter code: Endocuticle structural glycoprotein SgAbd-4 (116 aa).

Gln-1 is modified (pyrrolidone carboxylic acid). In terms of domain architecture, Chitin-binding type R&amp;R spans 20–92; that stretch reads DGSYQWNYET…PQGAHFPTPP (73 aa). Thr-90 and Thr-107 each carry an O-linked (HexNAc...) threonine glycan. Residue Ser-110 is glycosylated (O-linked (HexNAc...) serine). O-linked (HexNAc...) threonine glycosylation is present at Thr-111. At Pro-116 the chain carries Proline amide.

Its function is as follows. Component of the abdominal endocuticle. This is Endocuticle structural glycoprotein SgAbd-4 from Schistocerca gregaria (Desert locust).